Reading from the N-terminus, the 688-residue chain is Nucleolar protein 10 (688 aa).

An N-acetylmethionine modification is found at Met-1. Ser-25 carries the phosphoserine modification. WD repeat units follow at residues 44 to 82, 88 to 124, 127 to 163, 170 to 205, 219 to 258, 262 to 300, and 304 to 341; these read ELIQ…CYDT, KFER…FHSQ, FYYK…RLNL, NPLQ…CWDP, NSVT…LYDL, KPLL…MWNK, and KIFT…IYYI. The stretch at 423 to 446 forms a coiled coil; sequence EYRKDKIRQKIEETRAQRVQLKKL. Ser-475 carries the phosphoserine modification. A Phosphothreonine modification is found at Thr-481. Ser-514 is modified (phosphoserine). 2 coiled-coil regions span residues 514–589 and 640–673; these read SEKR…TVLK and SKQL…LRRS. Disordered stretches follow at residues 529–557 and 645–688; these read LREK…EKAW and FTLK…RSFH. Residues 648-663 show a composition bias toward basic and acidic residues; that stretch reads KRSEQQKKQQEAEKLH. Positions 664-688 are enriched in basic residues; that stretch reads RQERKRLRRSAGHLKSRHKRGRSFH.

The protein belongs to the WD repeat NOL10/ENP2 family.

Its subcellular location is the nucleus. The protein localises to the nucleolus. This is Nucleolar protein 10 (NOL10) from Homo sapiens (Human).